We begin with the raw amino-acid sequence, 245 residues long: 1-(5-phosphoribosyl)-5-[(5-phosphoribosylamino)methylideneamino] imidazole-4-carboxamide isomerase (245 aa).

D7 (proton acceptor) is an active-site residue. D129 (proton donor) is an active-site residue.

It belongs to the HisA/HisF family.

Its subcellular location is the cytoplasm. The catalysed reaction is 1-(5-phospho-beta-D-ribosyl)-5-[(5-phospho-beta-D-ribosylamino)methylideneamino]imidazole-4-carboxamide = 5-[(5-phospho-1-deoxy-D-ribulos-1-ylimino)methylamino]-1-(5-phospho-beta-D-ribosyl)imidazole-4-carboxamide. Its pathway is amino-acid biosynthesis; L-histidine biosynthesis; L-histidine from 5-phospho-alpha-D-ribose 1-diphosphate: step 4/9. The chain is 1-(5-phosphoribosyl)-5-[(5-phosphoribosylamino)methylideneamino] imidazole-4-carboxamide isomerase from Pectobacterium atrosepticum (strain SCRI 1043 / ATCC BAA-672) (Erwinia carotovora subsp. atroseptica).